The primary structure comprises 299 residues: Pyridoxal 5'-phosphate synthase subunit PdxS (299 aa).

Aspartate 29 serves as a coordination point for D-ribose 5-phosphate. Lysine 86 serves as the catalytic Schiff-base intermediate with D-ribose 5-phosphate. Glycine 158 lines the D-ribose 5-phosphate pocket. D-glyceraldehyde 3-phosphate is bound at residue arginine 170. Residues glycine 219 and 240–241 each bind D-ribose 5-phosphate; that span reads GS.

It belongs to the PdxS/SNZ family. In the presence of PdxT, forms a dodecamer of heterodimers.

It catalyses the reaction aldehydo-D-ribose 5-phosphate + D-glyceraldehyde 3-phosphate + L-glutamine = pyridoxal 5'-phosphate + L-glutamate + phosphate + 3 H2O + H(+). It participates in cofactor biosynthesis; pyridoxal 5'-phosphate biosynthesis. In terms of biological role, catalyzes the formation of pyridoxal 5'-phosphate from ribose 5-phosphate (RBP), glyceraldehyde 3-phosphate (G3P) and ammonia. The ammonia is provided by the PdxT subunit. Can also use ribulose 5-phosphate and dihydroxyacetone phosphate as substrates, resulting from enzyme-catalyzed isomerization of RBP and G3P, respectively. This is Pyridoxal 5'-phosphate synthase subunit PdxS from Protochlamydia amoebophila (strain UWE25).